The primary structure comprises 78 residues: Sec-independent protein translocase protein TatA (78 aa).

A helical membrane pass occupies residues 1–21 (MGSLSIWHWIVVVAVILLLFG). The segment covering 43 to 55 (MKDDEKTAEKPEP) has biased composition (basic and acidic residues). A disordered region spans residues 43 to 78 (MKDDEKTAEKPEPVKTINHNADGSGAARSDTGSKVI).

The protein belongs to the TatA/E family. The Tat system comprises two distinct complexes: a TatABC complex, containing multiple copies of TatA, TatB and TatC subunits, and a separate TatA complex, containing only TatA subunits. Substrates initially bind to the TatABC complex, which probably triggers association of the separate TatA complex to form the active translocon.

The protein localises to the cell inner membrane. Part of the twin-arginine translocation (Tat) system that transports large folded proteins containing a characteristic twin-arginine motif in their signal peptide across membranes. TatA could form the protein-conducting channel of the Tat system. The protein is Sec-independent protein translocase protein TatA of Nitrobacter winogradskyi (strain ATCC 25391 / DSM 10237 / CIP 104748 / NCIMB 11846 / Nb-255).